The sequence spans 1039 residues: Probable calcium-transporting ATPase 9, plasma membrane-type (1039 aa).

Residues 1–175 are Cytoplasmic-facing; that stretch reads MEKLDRYLQE…FVWDALQDMT (175 aa). The next 2 helical transmembrane spans lie at 176–196 and 199–219; these read LIIL…TEGW and GMYD…VTAV. Over 220–250 the chain is Cytoplasmic; it reads SDYKQSLQFKELDNEKKKIFIHVTRDGRRQK. 2 consecutive transmembrane segments (helical) span residues 251–271 and 353–373; these read ISIY…DQVP and VATI…LVLL. Topologically, residues 374–406 are cytoplasmic; the sequence is VRFLIDKGMTVGLLKWYSTDALTIVNYFATAVT. A helical membrane pass occupies residues 407 to 427; sequence IIVVAVPEGLPLAVTLSLAFA. D456 serves as the catalytic 4-aspartylphosphate intermediate. The Mg(2+) site is built by D758 and D762. A helical transmembrane segment spans residues 825–845; it reads IVALVINFVSACIIGSAPLTA. Residues 846–847 lie on the Cytoplasmic side of the membrane; that stretch reads VQ. 2 consecutive transmembrane segments (helical) span residues 848 to 868 and 892 to 912; these read LLWV…TEPP and NIMG…FGGE. The Cytoplasmic portion of the chain corresponds to 913 to 960; that stretch reads RLLNIKGADSKSIINTLIFNSFVFCQVFNEINSREMQKINVFRGIISN. 2 consecutive transmembrane segments (helical) span residues 961–981 and 995–1015; these read WIFI…IEFL and WLLS…LKCI. Over 1016 to 1039 the chain is Cytoplasmic; that stretch reads PVGSGETSATPNGYRPLANGPDDI.

Belongs to the cation transport ATPase (P-type) (TC 3.A.3) family. Type IIB subfamily.

The protein localises to the membrane. The catalysed reaction is Ca(2+)(in) + ATP + H2O = Ca(2+)(out) + ADP + phosphate + H(+). Its activity is regulated as follows. Activated by calmodulin. Its function is as follows. This magnesium-dependent enzyme catalyzes the hydrolysis of ATP coupled with the translocation of calcium from the cytosol out of the cell, into the endoplasmic reticulum, or into organelles. The protein is Probable calcium-transporting ATPase 9, plasma membrane-type of Oryza sativa subsp. japonica (Rice).